Consider the following 528-residue polypeptide: T-complex protein 1 subunit delta (528 aa).

It belongs to the TCP-1 chaperonin family. Heterooligomeric complex of about 850 to 900 kDa that forms two stacked rings, 12 to 16 nm in diameter.

The protein localises to the cytoplasm. Molecular chaperone; assists the folding of proteins upon ATP hydrolysis. Known to play a role, in vitro, in the folding of actin and tubulin. In yeast may play a role in mitotic spindle formation. In Saccharomyces cerevisiae (strain ATCC 204508 / S288c) (Baker's yeast), this protein is T-complex protein 1 subunit delta (CCT4).